Consider the following 71-residue polypeptide: MGMRMMVTVFLLGVLATTVVSLRSNRASDGRRGIVNKLNDLVPQYWTECCGRIGPHCSRCICPEVVCPKNG.

An N-terminal signal peptide occupies residues 1–21 (MGMRMMVTVFLLGVLATTVVS). Residues 22-37 (LRSNRASDGRRGIVNK) constitute a propeptide that is removed on maturation. Asparagine 70 is subject to Asparagine amide.

The protein belongs to the conotoxin A superfamily. In terms of processing, contains 3 disulfide bonds. They are not indicated here, since framework IV presents two different connectivities (I-V, II-III, IV-VI and I-III, II-V, IV-VI). Expressed by the venom duct.

The protein localises to the secreted. The polypeptide is Conotoxin Bu23 (Conus bullatus (Bubble cone)).